Consider the following 117-residue polypeptide: uncharacterized protein (117 aa).

Helical transmembrane passes span 43-63 (APIMLVSLAAIVLLIYLLMLL) and 73-93 (AVQHVPMAVFALVCAYPVFIV).

The protein localises to the cell membrane. This is an uncharacterized protein from Bacillus subtilis (strain 168).